The sequence spans 345 residues: Anthranilate phosphoribosyltransferase (345 aa).

Residues glycine 84, 87 to 88 (GD), threonine 92, 94 to 97 (NIST), 112 to 120 (KHGNRSVSS), and serine 124 contribute to the 5-phospho-alpha-D-ribose 1-diphosphate site. Position 84 (glycine 84) interacts with anthranilate. Position 96 (serine 96) interacts with Mg(2+). Asparagine 115 is a binding site for anthranilate. Residue arginine 170 participates in anthranilate binding. Aspartate 229 and glutamate 230 together coordinate Mg(2+).

This sequence belongs to the anthranilate phosphoribosyltransferase family. As to quaternary structure, homodimer. Mg(2+) serves as cofactor.

The enzyme catalyses N-(5-phospho-beta-D-ribosyl)anthranilate + diphosphate = 5-phospho-alpha-D-ribose 1-diphosphate + anthranilate. Its pathway is amino-acid biosynthesis; L-tryptophan biosynthesis; L-tryptophan from chorismate: step 2/5. Catalyzes the transfer of the phosphoribosyl group of 5-phosphorylribose-1-pyrophosphate (PRPP) to anthranilate to yield N-(5'-phosphoribosyl)-anthranilate (PRA). The sequence is that of Anthranilate phosphoribosyltransferase from Xanthomonas axonopodis pv. citri (strain 306).